The sequence spans 323 residues: Probable cell division protein WhiA (323 aa).

The segment at residues 275-309 (TLKELGEMLTTGQVSKSGINHRLRKLDQIAERLRS) is a DNA-binding region (H-T-H motif).

Belongs to the WhiA family.

In terms of biological role, involved in cell division and chromosome segregation. The chain is Probable cell division protein WhiA from Listeria welshimeri serovar 6b (strain ATCC 35897 / DSM 20650 / CCUG 15529 / CIP 8149 / NCTC 11857 / SLCC 5334 / V8).